Here is a 130-residue protein sequence, read N- to C-terminus: Small ribosomal subunit protein uS9 (130 aa).

It belongs to the universal ribosomal protein uS9 family.

This chain is Small ribosomal subunit protein uS9, found in Lawsonia intracellularis (strain PHE/MN1-00).